Here is a 111-residue protein sequence, read N- to C-terminus: Latartoxin-2b (111 aa).

A signal peptide spans methionine 1–serine 19. Residues glutamate 20 to arginine 43 constitute a propeptide, removed in mature form. The short motif at glycine 40–arginine 43 is the Processing quadruplet motif element. Disulfide bonds link cysteine 45–cysteine 62, cysteine 52–cysteine 73, cysteine 61–cysteine 87, cysteine 75–cysteine 85, and cysteine 78–cysteine 99. Valine amide is present on valine 110.

It belongs to the neurotoxin 19 (CSTX) family. 11 (latartoxin) subfamily. In terms of processing, contains 5 disulfide bonds. Post-translationally, cleavage of the propeptide depends on the processing quadruplet motif (XXXR, with at least one of X being E). Expressed by the venom gland.

It localises to the secreted. Functionally, insect toxin. This is Latartoxin-2b from Lachesana tarabaevi (Spider).